We begin with the raw amino-acid sequence, 446 residues long: Elongation factor 1-alpha (446 aa).

In terms of domain architecture, tr-type G spans 5-230; sequence KNHLNLVVIG…DALDQPKRPK (226 aa). The G1 stretch occupies residues 14–21; it reads GHVDSGKS. Residue 14–21 coordinates GTP; sequence GHVDSGKS. Residues 70–74 form a G2 region; that stretch reads GITID. The tract at residues 91 to 94 is G3; it reads DAPG. GTP-binding positions include 91–95 and 153–156; these read DAPGH and NKMD. A G4 region spans residues 153-156; it reads NKMD. A G5 region spans residues 194-196; sequence SGW.

Belongs to the TRAFAC class translation factor GTPase superfamily. Classic translation factor GTPase family. EF-Tu/EF-1A subfamily.

The protein resides in the cytoplasm. Its function is as follows. This protein promotes the GTP-dependent binding of aminoacyl-tRNA to the A-site of ribosomes during protein biosynthesis. The polypeptide is Elongation factor 1-alpha (EFAA) (Stylonychia lemnae (Ciliate)).